Reading from the N-terminus, the 942-residue chain is Homeobox protein 2 (942 aa).

Composition is skewed to low complexity over residues 32 to 87 (ECNE…NINE) and 98 to 130 (SPYSSPSSSISSPSRSPSPNSPASSSPIHSPIP). Disordered stretches follow at residues 32-149 (ECNE…PQNI), 161-494 (LESP…RLKK), 537-580 (RQEK…QGGA), and 609-942 (FKNN…CQQN). The span at 131–149 (NTNFKQSGEYQSIPSPQNI) shows a compositional bias: polar residues. A compositionally biased stretch (low complexity) spans 163 to 261 (SPNSSNSSPS…PSSNLSKSNS (99 aa)). Residues 269–290 (QAPSNTSSPQLLSPNHNQQRIS) are compositionally biased toward polar residues. Composition is skewed to low complexity over residues 299–430 (NNNH…NSSP) and 450–464 (NNNNNNNNNNNSNSS). The segment covering 465-481 (FDEYQPQQKVSRSNSPN) has biased composition (polar residues). The homeobox DNA-binding region spans 485–544 (EKKRRTRLKKEQADILKTFFDNDDYPTKDDKETLANRLGMSYCAVTTWFSNKRQEKKRRG). 6 stretches are compositionally biased toward low complexity: residues 609-621 (FKNNNMDNNNKNV), 628-685 (NNNN…GSSD), 694-737 (NNNN…NNNN), 752-764 (NNNNNNNNNNNNN), 776-864 (SDDT…YLNN), and 890-927 (NNFNGDNNNNNNNKNNNNNNQNNNGNGNNNNNNNNDNN). Residues 835-865 (NNNNNNNNQNNNNNNNNNQYNNNNKNYLNNI) adopt a coiled-coil conformation.

The protein localises to the nucleus. Functionally, putative transcription factor that may potentiate the function of warA. This Dictyostelium discoideum (Social amoeba) protein is Homeobox protein 2 (hbx2).